A 1004-amino-acid chain; its full sequence is Cadmium/zinc-transporting ATPase HMA3 (1004 aa).

Residues 42–108 (KKTYLDVLGV…ALNKAGLEAS (67 aa)) form the HMA domain. 8 helical membrane-spanning segments follow: residues 120 to 140 (RWPS…FFEW), 144 to 164 (PLQC…VRRG), 171 to 191 (LSLD…CLGD), 193 to 213 (TEAG…TLAC), 340 to 360 (CAKY…LIPA), 371 to 391 (WKLA…LSTP), 683 to 703 (IAVN…LAAA), and 707 to 727 (VLWA…LNSM). Residues 931–952 (TGCGASKRSPPAEGSCSGGEGG) form a disordered region.

This sequence belongs to the cation transport ATPase (P-type) (TC 3.A.3) family. Type IB subfamily. As to expression, specifically expressed in roots.

It localises to the vacuole membrane. It catalyses the reaction Zn(2+)(in) + ATP + H2O = Zn(2+)(out) + ADP + phosphate + H(+). The enzyme catalyses Cd(2+)(in) + ATP + H2O = Cd(2+)(out) + ADP + phosphate + H(+). Its function is as follows. Root-specific cadmium (Cd) transporter that mediates Cd efflux in root vacuoles. Involved in Cd detoxification by sequestrating Cd into root vacuoles and limiting translocation of Cd from the roots to the shoots, and accumulation in grains. The protein is Cadmium/zinc-transporting ATPase HMA3 of Oryza sativa subsp. japonica (Rice).